Here is a 725-residue protein sequence, read N- to C-terminus: Golgin candidate 4 (725 aa).

A disordered region spans residues 17–62; that stretch reads HDVHDDDEDDDEDLTIYGSTNGGTDRRNSNGFRYSRSPMANGFESP. The segment covering 21-30 has biased composition (acidic residues); that stretch reads DDDEDDDEDL. The stretch at 66–132 forms a coiled coil; the sequence is EIERYKAEIN…LKESRLDLSR (67 aa). Disordered regions lie at residues 134 to 183, 191 to 210, and 311 to 349; these read SNNN…SHKK, LEER…EKER, and ASQK…KEDM. Over residues 148 to 175 the composition is skewed to polar residues; that stretch reads NRSQRSPTNWKNRNQMNNGIASKPNGTE. Coiled coils occupy residues 191–316, 344–407, and 437–563; these read LEER…QKST, PGKE…QTNE, and EIRK…LNRM. Residues 324 to 349 are compositionally biased toward basic and acidic residues; sequence STEDLSRHLSSLDEEKAGTFPGKEDM. The GRIP domain maps to 562 to 613; sequence RMSMDSDFLVDRRIVIKLLVTYFQRNHSREVLDLMVRMLGFSEEEKQRIGLA. Residues 672 to 688 are compositionally biased toward basic and acidic residues; it reads ERERREAEDAANKEQEK. Positions 672-725 are disordered; it reads ERERREAEDAANKEQEKATVSSTQRPKYEQSDSEFSTVPLTSSNSNHRLSRLLT. Positions 711 to 725 are enriched in low complexity; it reads LTSSNSNHRLSRLLT.

The protein resides in the golgi apparatus. Functionally, golgi matrix protein playing a role in tethering of vesicles to Golgi membranes and in maintaining the overall structure of the Golgi apparatus. The protein is Golgin candidate 4 (GC4) of Arabidopsis thaliana (Mouse-ear cress).